The sequence spans 264 residues: tRNA (guanine-N(7)-)-methyltransferase (264 aa).

The segment at 1–39 is disordered; that stretch reads MIHDDDPNAPGAPHDDATAAPASATRAAPAAGDDDDANP. The span at 18 to 31 shows a compositional bias: low complexity; it reads TAAPASATRAAPAA. Residues Glu-94, Glu-119, Asp-146, and Asp-169 each contribute to the S-adenosyl-L-methionine site. Asp-169 is a catalytic residue. Substrate-binding positions include Lys-173, Asp-205, and 240-243; that span reads TKFE.

This sequence belongs to the class I-like SAM-binding methyltransferase superfamily. TrmB family.

It catalyses the reaction guanosine(46) in tRNA + S-adenosyl-L-methionine = N(7)-methylguanosine(46) in tRNA + S-adenosyl-L-homocysteine. The protein operates within tRNA modification; N(7)-methylguanine-tRNA biosynthesis. Catalyzes the formation of N(7)-methylguanine at position 46 (m7G46) in tRNA. This is tRNA (guanine-N(7)-)-methyltransferase from Burkholderia mallei (strain ATCC 23344).